The following is a 461-amino-acid chain: BSD domain-containing protein 1 (461 aa).

2 positions are modified to phosphoserine: serine 123 and serine 197. Residues 177-229 (WLSQFCLEEKKGEISELLVGSPSIRALYTKMVPAAVSHSEFWHRYFYKVHQLE) enclose the BSD domain. A disordered region spans residues 239 to 384 (KQRAEQSISE…SGPEPRPPAR (146 aa)). The span at 250-259 (PGWEEEEEEL) shows a compositional bias: acidic residues. Residues 295–318 (LVTPVEPPTEVTPSESSESVSLVT) are compositionally biased toward low complexity. Residue threonine 387 is modified to Phosphothreonine. Positions 398-430 (VFELNSDSGKSTPSNNGKKGSSTDISEDWEKDF) are disordered. Polar residues predominate over residues 402-421 (NSDSGKSTPSNNGKKGSSTD). A phosphoserine mark is found at serine 418, serine 419, and serine 449.

This is BSD domain-containing protein 1 (BSDC1) from Bos taurus (Bovine).